Consider the following 307-residue polypeptide: MQETTILILGAGAWGASLANLALANGHRVRVWSRRGTETLAALLEDVDIILSAISMKGVREVASQIQSLTPSPETIFVTATKGLEPETIYTPSQIWQSCFPNHPVVVLSGPNLSKEIDQSLPAATVVASRIATAAATVQLAFSSSRFRVYTNPDPIGVELGGTLKNVIAIASGVCDGLHLGTNAKAALVTRGLTEMVRIGNCWGAKTETFYGLSGLGDLLATCNSPLSRNYQVGYQLAGGQTLAQILAKLPGTAEGVNTCQVLVQLARQQNIVIPITEQVYRLLQGEVTPQQALDELMLRDIKPEYN.

Tryptophan 14, arginine 34, arginine 35, and lysine 82 together coordinate NADPH. Sn-glycerol 3-phosphate is bound by residues lysine 82 and glycine 110. Serine 114 contributes to the NADPH binding site. Sn-glycerol 3-phosphate-binding residues include lysine 165, aspartate 218, serine 228, arginine 229, and asparagine 230. Lysine 165 (proton acceptor) is an active-site residue. Arginine 229 serves as a coordination point for NADPH. Residue glutamate 255 coordinates NADPH.

This sequence belongs to the NAD-dependent glycerol-3-phosphate dehydrogenase family.

The protein resides in the cytoplasm. It catalyses the reaction sn-glycerol 3-phosphate + NAD(+) = dihydroxyacetone phosphate + NADH + H(+). The catalysed reaction is sn-glycerol 3-phosphate + NADP(+) = dihydroxyacetone phosphate + NADPH + H(+). Its pathway is membrane lipid metabolism; glycerophospholipid metabolism. Its function is as follows. Catalyzes the reduction of the glycolytic intermediate dihydroxyacetone phosphate (DHAP) to sn-glycerol 3-phosphate (G3P), the key precursor for phospholipid synthesis. In Trichormus variabilis (strain ATCC 29413 / PCC 7937) (Anabaena variabilis), this protein is Glycerol-3-phosphate dehydrogenase [NAD(P)+].